The chain runs to 389 residues: NAD-dependent protein deacetylase sirtuin-2 (389 aa).

The segment at 1-34 (MAEPDPSDPLETQAGKVQEAQDSDSDTEGGATGG) is disordered. Ala-2 is subject to N-acetylalanine. 2 positions are modified to phosphoserine: Ser-23 and Ser-25. At Thr-27 the chain carries Phosphothreonine. The short motif at 41-51 (LRNLFTQTLGL) is the Nuclear export signal element. The residue at position 53 (Ser-53) is a Phosphoserine. Residues 57-338 (RLLDELTLEG…LALADLLGWK (282 aa)) form the Deacetylase sirtuin-type domain. NAD(+) contacts are provided by residues 85–89 (AGIST) and 95–97 (DFR). Ser-100 is subject to Phosphoserine. 167–170 (QNID) is an NAD(+) binding site. The active-site Proton acceptor is the His-187. 4 residues coordinate Zn(2+): Cys-195, Cys-200, Cys-221, and Cys-224. NAD(+) contacts are provided by residues 262 to 263 (TS), 286 to 288 (NKE), and Cys-324. A disordered region spans residues 350–389 (ANIDAQSGSQAPNPSTTISPGKSPPPAKEAARTKEKEEQQ). A compositionally biased stretch (polar residues) spans 353 to 369 (DAQSGSQAPNPSTTISP). Ser-368 and Ser-372 each carry phosphoserine. The segment covering 378–389 (EAARTKEKEEQQ) has biased composition (basic and acidic residues).

It belongs to the sirtuin family. Class I subfamily. As to quaternary structure, interacts with CDC20, FOXO3 and FZR1. Associates with microtubule in primary cortical mature neurons. Homotrimer. Interacts (via both phosphorylated, unphosphorylated, active or inactive forms) with HDAC6; the interaction is necessary for the complex to interact with alpha-tubulin, suggesting that these proteins belong to a large complex that deacetylates the cytoskeleton. Interacts with FOXO1; the interaction is disrupted upon serum-starvation or oxidative stress, leading to increased level of acetylated FOXO1 and induction of autophagy. Interacts with RELA; the interaction occurs in the cytoplasm and is increased in a TNF-alpha-dependent manner. Interacts with HOXA10; the interaction is direct. Interacts with YWHAB and YWHAG; the interactions occur in a AKT-dependent manner and increase SIRT2-dependent TP53 deacetylation. Interacts with MAPK1/ERK2 and MAPK3/ERK1; the interactions increase SIRT2 stability and deacetylation activity. Interacts (phosphorylated form) with KMT5A isoform 2; the interaction is direct, stimulates KMT5A-mediated methyltransferase activity on histone at 'Lys-20' (H4K20me1) and is increased in a H(2)O(2)-induced oxidative stress-dependent manner. Interacts with G6PD; the interaction is enhanced by H(2)O(2) treatment. Interacts with a G1/S-specific cyclin E-CDK2 complex. Interacts with AURKA, CDK5R1 (p35 form) and CDK5 and HIF1A. Interacts with the tRNA ligase SARS1; recruited to the VEGFA promoter via interaction with SARS1. Isoform 2 and isoform 4 associate with microtubules in primary cortical mature neurons. Interacts with BEX4; negatively regulates alpha-tubulin deacetylation by SIRT2. It depends on Zn(2+) as a cofactor. Post-translationally, phosphorylated at phosphoserine and phosphothreonine. Phosphorylated at Ser-368 by a mitotic kinase CDK1/cyclin B at the G2/M transition; phosphorylation regulates the delay in cell-cycle progression. Phosphorylated at Ser-368 by a mitotic kinase G1/S-specific cyclin E/Cdk2 complex; phosphorylation inactivates SIRT2-mediated alpha-tubulin deacetylation and thereby negatively regulates cell adhesion, cell migration and neurite outgrowth during neuronal differentiation. Phosphorylated by cyclin A/Cdk2 and p35-Cdk5 complexes and to a lesser extent by the cyclin D3/Cdk4 and cyclin B/Cdk1, in vitro. Dephosphorylated at Ser-368 by CDC14A and CDC14B around early anaphase. Acetylated by EP300; acetylation leads both to the decreased of SIRT2-mediated alpha-tubulin deacetylase activity and SIRT2-mediated down-regulation of TP53 transcriptional activity. In terms of processing, ubiquitinated. As to expression, isoform 1 is weakly expressed in the cortex at postnatal(P) days P1, P3 and P7, and increases progressively between P17 and older adult cortex. Isoform 1 is also expressed in heart, liver and skeletal muscle, weakly expressed in the striatum and spinal cord. Isoform 2 is not expressed in the cortex at P1, P3 and P7, and increases strongly and progressively between P17 and older adult cortex. Isoform 2 is also expressed in the heart, liver, striatum and spinal cord. Isoform 4 is weakly expressed in older adult cortex and spinal cords. Expressed in the cortex. Expressed in postnatal sciatic nerves during myelination and during remyelination after nerve injury. Expressed in neurons, oligodendrocytes, Schwann cells, Purkinje cells and in astrocytes of white matter. Strongly expressed in preadipocytes compared with differentiated adipocytes. Expressed in cerebellar granule cells. Expressed in the inner ear: in the cochlea, expressed in types I and V fibrocytes in the spiral ligament (SL) and slightly in stria vascularis (SV); in the organ of Corti, expressed in some supporting cells; in the crista ampullaris, expressed in spiral ganglion cells; also expressed in the endolymphatic sac (ES) epithelial cells (at protein level). Expressed in the brain, spinal cord, optic nerve and hippocampus. Strongly expressed in 6-8 week-old ovulated meiosis II oocytes and weakly expressed in 45-58 week-old ovulated meiosis II oocytes. Expressed in the cochlea, vestibule and acoustic nerve of the inner ear.

It is found in the nucleus. It localises to the cytoplasm. Its subcellular location is the perinuclear region. The protein resides in the perikaryon. The protein localises to the cytoskeleton. It is found in the cell projection. It localises to the growth cone. Its subcellular location is the myelin membrane. The protein resides in the microtubule organizing center. The protein localises to the centrosome. It is found in the spindle. It localises to the chromosome. Its subcellular location is the midbody. The protein resides in the centriole. The catalysed reaction is N(6)-acetyl-L-lysyl-[protein] + NAD(+) + H2O = 2''-O-acetyl-ADP-D-ribose + nicotinamide + L-lysyl-[protein]. It catalyses the reaction N(6)-tetradecanoyl-L-lysyl-[protein] + NAD(+) + H2O = 2''-O-tetradecanoyl-ADP-D-ribose + nicotinamide + L-lysyl-[protein]. The enzyme catalyses N(6)-hexadecanoyl-L-lysyl-[protein] + NAD(+) + H2O = 2''-O-hexadecanoyl-ADP-D-ribose + nicotinamide + L-lysyl-[protein]. Inhibited by Sirtinol, A3 and M15 small molecules. Inhibited by nicotinamide. Inhibited by a macrocyclic peptide inhibitor S2iL5. Inhibited by EP300-induced acetylation. In terms of biological role, NAD-dependent protein deacetylase, which deacetylates internal lysines on histone and alpha-tubulin as well as many other proteins such as key transcription factors. Participates in the modulation of multiple and diverse biological processes such as cell cycle control, genomic integrity, microtubule dynamics, cell differentiation, metabolic networks, and autophagy. Plays a major role in the control of cell cycle progression and genomic stability. Functions in the antephase checkpoint preventing precocious mitotic entry in response to microtubule stress agents, and hence allowing proper inheritance of chromosomes. Positively regulates the anaphase promoting complex/cyclosome (APC/C) ubiquitin ligase complex activity by deacetylating CDC20 and FZR1, then allowing progression through mitosis. Associates both with chromatin at transcriptional start sites (TSSs) and enhancers of active genes. Plays a role in cell cycle and chromatin compaction through epigenetic modulation of the regulation of histone H4 'Lys-20' methylation (H4K20me1) during early mitosis. Specifically deacetylates histone H4 at 'Lys-16' (H4K16ac) between the G2/M transition and metaphase enabling H4K20me1 deposition by KMT5A leading to ulterior levels of H4K20me2 and H4K20me3 deposition throughout cell cycle, and mitotic S-phase progression. Deacetylates KMT5A modulating KMT5A chromatin localization during the mitotic stress response. Also deacetylates histone H3 at 'Lys-57' (H3K56ac) during the mitotic G2/M transition. During oocyte meiosis progression, may deacetylate histone H4 at 'Lys-16' (H4K16ac) and alpha-tubulin, regulating spindle assembly and chromosome alignment by influencing microtubule dynamics and kinetochore function. Deacetylates histone H4 at 'Lys-16' (H4K16ac) at the VEGFA promoter and thereby contributes to regulate expression of VEGFA, a key regulator of angiogenesis. Deacetylates alpha-tubulin at 'Lys-40' and hence controls neuronal motility, oligodendroglial cell arbor projection processes and proliferation of non-neuronal cells. Phosphorylation at Ser-368 by a G1/S-specific cyclin E-CDK2 complex inactivates SIRT2-mediated alpha-tubulin deacetylation, negatively regulating cell adhesion, cell migration and neurite outgrowth during neuronal differentiation. Deacetylates PARD3 and participates in the regulation of Schwann cell peripheral myelination formation during early postnatal development and during postinjury remyelination. Involved in several cellular metabolic pathways. Plays a role in the regulation of blood glucose homeostasis by deacetylating and stabilizing phosphoenolpyruvate carboxykinase PCK1 activity in response to low nutrient availability. Acts as a key regulator in the pentose phosphate pathway (PPP) by deacetylating and activating the glucose-6-phosphate G6PD enzyme, and therefore, stimulates the production of cytosolic NADPH to counteract oxidative damage. Maintains energy homeostasis in response to nutrient deprivation as well as energy expenditure by inhibiting adipogenesis and promoting lipolysis. Attenuates adipocyte differentiation by deacetylating and promoting FOXO1 interaction to PPARG and subsequent repression of PPARG-dependent transcriptional activity. Plays a role in the regulation of lysosome-mediated degradation of protein aggregates by autophagy in neuronal cells. Deacetylates FOXO1 in response to oxidative stress or serum deprivation, thereby negatively regulating FOXO1-mediated autophagy. Deacetylates a broad range of transcription factors and co-regulators regulating target gene expression. Deacetylates transcriptional factor FOXO3 stimulating the ubiquitin ligase SCF(SKP2)-mediated FOXO3 ubiquitination and degradation. Deacetylates HIF1A and therefore promotes HIF1A degradation and inhibition of HIF1A transcriptional activity in tumor cells in response to hypoxia. Deacetylates RELA in the cytoplasm inhibiting NF-kappaB-dependent transcription activation upon TNF-alpha stimulation. Inhibits transcriptional activation by deacetylating p53/TP53 and EP300. Also deacetylates EIF5A. Functions as a negative regulator on oxidative stress-tolerance in response to anoxia-reoxygenation conditions. Plays a role as tumor suppressor. In addition to protein deacetylase activity, also has activity toward long-chain fatty acyl groups and mediates protein-lysine demyristoylation and depalmitoylation of target proteins, such as ARF6 and KRAS, thereby regulating their association with membranes. Its function is as follows. Deacetylates alpha-tubulin. The sequence is that of NAD-dependent protein deacetylase sirtuin-2 (Sirt2) from Mus musculus (Mouse).